The primary structure comprises 262 residues: Serine O-acetyltransferase (262 aa).

The Acyl-thioester intermediate role is filled by C107. K128 is a substrate binding site. H200 (proton acceptor) is an active-site residue. E202 is a catalytic residue. R214 contributes to the substrate binding site.

It belongs to the MetA family.

It is found in the cytoplasm. The catalysed reaction is L-serine + acetyl-CoA = O-acetyl-L-serine + CoA. It carries out the reaction L-homoserine + acetyl-CoA = O-acetyl-L-homoserine + CoA. It participates in amino-acid biosynthesis; L-cysteine biosynthesis; L-cysteine from L-serine: step 1/2. Its function is as follows. Transfers an acetyl group from acetyl-CoA to L-serine, forming acetyl-L-serine. In vitro, also has homoserine acetyl transferase activity. In Lactobacillus acidophilus, this protein is Serine O-acetyltransferase.